Here is a 150-residue protein sequence, read N- to C-terminus: NADH-quinone oxidoreductase subunit A (150 aa).

The next 3 helical transmembrane spans lie at 14–34, 66–86, and 96–116; these read FAVFLIGAIGLCGLMLLGAFF, FYLVAMFFVIFDVEALYLYAW, and IGFIEATIFILVLLAGLVYLV.

The protein belongs to the complex I subunit 3 family. As to quaternary structure, NDH-1 is composed of 13 different subunits. Subunits NuoA, H, J, K, L, M, N constitute the membrane sector of the complex.

The protein localises to the cell inner membrane. It catalyses the reaction a quinone + NADH + 5 H(+)(in) = a quinol + NAD(+) + 4 H(+)(out). Functionally, NDH-1 shuttles electrons from NADH, via FMN and iron-sulfur (Fe-S) centers, to quinones in the respiratory chain. The immediate electron acceptor for the enzyme in this species is believed to be ubiquinone. Couples the redox reaction to proton translocation (for every two electrons transferred, four hydrogen ions are translocated across the cytoplasmic membrane), and thus conserves the redox energy in a proton gradient. In Yersinia enterocolitica serotype O:8 / biotype 1B (strain NCTC 13174 / 8081), this protein is NADH-quinone oxidoreductase subunit A.